The sequence spans 1070 residues: MLRDGNEGMSTIPGFNQIQFEGFCRFIDQGLTEELHKFPKIEDTDQEIEFQLFVETYQLVEPLIKERDAVYESLTYSSELYVPAGLIWKTSRDMQEQTVFIGNIPLMNSLGTSIVNGIYRIVINQILQSPGIYYRSELDHNGISVYTGTIISDWGGRSELEIDRKARIWARVSRKQKISILVPSSAMGSNLREILDNVCYPEIFLSFPNDKEKKKFGSKENAILEFYQQFACVGGDPIFSESLCKELQKKFFQQRCELGRIGRRNMNRRLNLDIPQNNIFLLPRDVLAAADHLIGMKFGMGTLDDMNHLKNKRIRSVADLLQDQFGLALVRLENVVRGTICGAIRHKLIPTPHNLVTSTPLTTTYESFFGLHPLSQVLDRTNPLTQIVHGRKSSYLGPGGLTGRTASFRIRDIHPSHYGRICPIDTSEGINVGLIGSLAIHARIGHWGSIESPFYEIYERSKEVQMVYLSPSRDEYYMVAAGNSLALNQGIQEEQVVPARYRQEFLTIAWEQIHLRSIFPFQYFSIGASLIPFIEHNDANRALMSSNMQRQAVPLSRSEKCIVGTGLEHQAALDSGVSVIAEHEGKIIYTETNKIVFSGNGDTISIPLVMYQRSNKNTCMHQNPQVQRGKCIKKGQILAGGASTVGGELALGKNILVAYMPWEGYNSEDAVLISERLVYGDIYTSFHIRKYEIKTHVTSQGPERITKEIPHLEANLLRNLDKNGIVMLGSWIETGDILVGKLTPQTAKESSYAPEDRLLRAILGIQVSTTRETCLKLPIGGRGRVIDVRWIQKKGGSSYNPETIRVYISQKREIKVGDKVAGRHGNKGIISKILPRQDMPYLQDGRPVDMVFNPLGVPSRMNVGQIFECSLGLAGDLLDRHYRIAPFDERYEQEASRKLVFPELYEASKQTANPWVFEPEYPGKSRIFDGRTGDPFEQPVIMGKSYILKLIHQVDDKIHGRSSGHYALVTQQPLRGRAKQGGQRVGEMEVWALEGFGVAHISQEMLTYKSDHIRARQEVLGTTIIGGTILNPEDAPESFRLLIRELRSLALELNHFLVSEKNFQINRKEA.

The protein belongs to the RNA polymerase beta chain family. In terms of assembly, in plastids the minimal PEP RNA polymerase catalytic core is composed of four subunits: alpha, beta, beta', and beta''. When a (nuclear-encoded) sigma factor is associated with the core the holoenzyme is formed, which can initiate transcription.

It is found in the plastid. It localises to the chloroplast. The catalysed reaction is RNA(n) + a ribonucleoside 5'-triphosphate = RNA(n+1) + diphosphate. In terms of biological role, DNA-dependent RNA polymerase catalyzes the transcription of DNA into RNA using the four ribonucleoside triphosphates as substrates. This chain is DNA-directed RNA polymerase subunit beta, found in Chloranthus spicatus (Chulantree).